Consider the following 58-residue polypeptide: Large ribosomal subunit protein bL32c (58 aa).

2 disordered regions span residues 1 to 21 and 34 to 58; these read MAVP…SQWM and LAGR…MQPN. Residues 44-58 show a composition bias toward low complexity; the sequence is QMQPTQMQPTQMQPN.

The protein belongs to the bacterial ribosomal protein bL32 family.

It is found in the plastid. The protein localises to the chloroplast. The chain is Large ribosomal subunit protein bL32c from Cyanidioschyzon merolae (strain NIES-3377 / 10D) (Unicellular red alga).